Reading from the N-terminus, the 396-residue chain is 8-amino-7-oxononanoate synthase (396 aa).

Arg19 provides a ligand contact to substrate. 106–107 lines the pyridoxal 5'-phosphate pocket; the sequence is GY. His131 provides a ligand contact to substrate. Pyridoxal 5'-phosphate contacts are provided by Ser176, His204, and Thr233. At Lys236 the chain carries N6-(pyridoxal phosphate)lysine. Thr350 provides a ligand contact to substrate.

The protein belongs to the class-II pyridoxal-phosphate-dependent aminotransferase family. BioF subfamily. Homodimer. Pyridoxal 5'-phosphate serves as cofactor.

The catalysed reaction is 6-carboxyhexanoyl-[ACP] + L-alanine + H(+) = (8S)-8-amino-7-oxononanoate + holo-[ACP] + CO2. It participates in cofactor biosynthesis; biotin biosynthesis. Functionally, catalyzes the decarboxylative condensation of pimeloyl-[acyl-carrier protein] and L-alanine to produce 8-amino-7-oxononanoate (AON), [acyl-carrier protein], and carbon dioxide. The protein is 8-amino-7-oxononanoate synthase of Pseudomonas savastanoi pv. phaseolicola (strain 1448A / Race 6) (Pseudomonas syringae pv. phaseolicola (strain 1448A / Race 6)).